The sequence spans 482 residues: tRNA(Ile)-lysidine synthase (482 aa).

ATP is bound at residue 28-33 (SGGPDS).

Belongs to the tRNA(Ile)-lysidine synthase family.

Its subcellular location is the cytoplasm. It carries out the reaction cytidine(34) in tRNA(Ile2) + L-lysine + ATP = lysidine(34) in tRNA(Ile2) + AMP + diphosphate + H(+). In terms of biological role, ligates lysine onto the cytidine present at position 34 of the AUA codon-specific tRNA(Ile) that contains the anticodon CAU, in an ATP-dependent manner. Cytidine is converted to lysidine, thus changing the amino acid specificity of the tRNA from methionine to isoleucine. This is tRNA(Ile)-lysidine synthase from Symbiobacterium thermophilum (strain DSM 24528 / JCM 14929 / IAM 14863 / T).